A 626-amino-acid polypeptide reads, in one-letter code: Basic helix-loop-helix ARNT-like protein 1 (626 aa).

Positions 1 to 60 (MADQRMDISSTISDFMSPGPTDLLSSSLGTSGVDCNRKRKGSSTDYQESMDTDKDDPHGR) are disordered. Position 17 is a phosphoserine; by GSK3-beta (Ser-17). Over residues 17-32 (SPGPTDLLSSSLGTSG) the composition is skewed to low complexity. The residue at position 21 (Thr-21) is a Phosphothreonine; by GSK3-beta. The short motif at 36–41 (NRKRKG) is the Nuclear localization signal element. Residues 51–60 (DTDKDDPHGR) show a composition bias toward basic and acidic residues. Residues 72–125 (NAREAHSQIEKRRRDKMNSFIDELASLVPTCNAMSRKLDKLTVLRMAVQHMKTL) enclose the bHLH domain. A Phosphoserine modification is found at Ser-78. Ser-90 is subject to Phosphoserine; by CK2. The Nuclear export signal 1 motif lies at 142–152 (LSDDELKHLIL). The PAS 1 domain occupies 143–215 (SDDELKHLIL…EQLSSSDTAP (73 aa)). A Glycyl lysine isopeptide (Lys-Gly) (interchain with G-Cter in SUMO2 and SUMO3) cross-link involves residue Lys-252. A Glycyl lysine isopeptide (Lys-Gly) (interchain with G-Cter in SUMO); alternate cross-link involves residue Lys-259. Lys-259 participates in a covalent cross-link: Glycyl lysine isopeptide (Lys-Gly) (interchain with G-Cter in SUMO2); alternate. Residues 326 to 396 (PQPAGGDIKV…ECHRQVLQTR (71 aa)) enclose the PAS 2 domain. Residues 361-369 (LAYLPQELL) carry the Nuclear export signal 2 motif. One can recognise a PAC domain in the interval 402–445 (NCYKFKIKDGSFITLRSRWFSFMNPWTKEVEYIVSTNTVVLANV). 2 disordered regions span residues 458-493 (ASPH…AGAG) and 511-596 (GSSP…PSND). Over residues 484–493 (IPGGTRAGAG) the composition is skewed to gly residues. An interaction with CIART region spans residues 508–588 (RIRGSSPSSC…ISIDMIDNDQ (81 aa)). Over residues 511–521 (GSSPSSCGSSP) the composition is skewed to low complexity. Lys-538 is subject to N6-acetyllysine.

Component of the circadian clock oscillator which includes the CRY1/2 proteins, CLOCK or NPAS2, BMAL1 or BMAL2, CSNK1D and/or CSNK1E, TIMELESS and the PER1/2/3 proteins. Forms a heterodimer with CLOCK. The CLOCK-BMAL1 heterodimer is required for E-box-dependent transactivation, for CLOCK nuclear translocation and degradation, and, for phosphorylation of both CLOCK and BMAL1. Part of a nuclear complex which also includes RACK1 and PRKCA; RACK1 and PRKCA are recruited to the complex in a circadian manner. Interacts with NPAS2. Interacts with EZH2. Interacts with SUMO3. Interacts with SIRT1. Interacts with AHR. Interacts with ID1, ID2 and ID3. Interacts with DDX4. Interacts with OGT. Interacts with EED and SUZ12. Interacts with MTA1. Interacts with CIART. Interacts with HSP90. Interacts with KAT2B and EP300. Interacts with BHLHE40/DEC1 and BHLHE41/DEC2. Interacts with RELB and the interaction is enhanced in the presence of CLOCK. Interacts with PER1, PER2, CRY1 and CRY2 and this interaction requires a translocation to the nucleus. Interaction of the CLOCK-BMAL1 heterodimer with PER or CRY inhibits transcription activation. Interaction of the CLOCK-BMAL1 with CRY1 is independent of DNA but with PER2 is off DNA. The CLOCK-BMAL1 heterodimer interacts with GSK3B. Interacts with KDM5A. Interacts with KMT2A; in a circadian manner. Interacts with UBE3A. Interacts with PRKCG. Interacts with MAGEL2. Interacts with NCOA2. Interacts with THRAP3. The CLOCK-BMAL1 heterodimer interacts with PASD1. Interacts with PASD1. Interacts with USP9X. Interacts with PIWIL2 (via PIWI domain). Interacts with HDAC3. Interacts with HNF4A. Post-translationally, ubiquitinated, leading to its proteasomal degradation. Deubiquitinated by USP9X. O-glycosylated; contains O-GlcNAc. O-glycosylation by OGT prevents protein degradation by inhibiting ubiquitination. It also stabilizes the CLOCK-BMAL1 heterodimer thereby increasing CLOCK-BMAL1-mediated transcription of genes in the negative loop of the circadian clock such as PER1/2/3 and CRY1/2. In terms of processing, acetylated on Lys-538 by CLOCK during the repression phase of the circadian cycle. Acetylation facilitates recruitment of CRY1 protein and initiates the repression phase of the circadian cycle. Acetylated at Lys-538 by KAT5 during the activation phase of the cycle, leading to recruitment of the positive transcription elongation factor b (P-TEFb) and BRD4, followed by productive elongation of circadian transcripts. Deacetylated by SIRT1, which may result in decreased protein stability. Post-translationally, phosphorylated upon dimerization with CLOCK. Phosphorylation enhances the transcriptional activity, alters the subcellular localization and decreases the stability of the CLOCK-BMAL1 heterodimer by promoting its degradation. Phosphorylation shows circadian variations in the liver with a peak between CT10 to CT14. Phosphorylation at Ser-90 by CK2 is essential for its nuclear localization, its interaction with CLOCK and controls CLOCK nuclear entry. Dephosphorylation at Ser-78 is important for dimerization with CLOCK and transcriptional activity. Sumoylated on Lys-259 upon dimerization with CLOCK. Predominantly conjugated to poly-SUMO2/3 rather than SUMO1 and the level of these conjugates undergo rhythmic variation, peaking at CT9-CT12. Sumoylation localizes it exclusively to the PML body and promotes its ubiquitination in the PML body, ubiquitin-dependent proteasomal degradation and the transcriptional activity of the CLOCK-BMAL1 heterodimer. In terms of processing, undergoes lysosome-mediated degradation in a time-dependent manner in the liver. As to expression, highly expressed in the suprachiasmatic nucleus (SCN). Also expressed in all other tissues examined including kidney, intestine, liver, heart, spleen, brain, muscle, lung, harderian gland and eye. Low expression in kidney and spleen.

It is found in the nucleus. The protein localises to the cytoplasm. It localises to the PML body. Transcriptional activator which forms a core component of the circadian clock. The circadian clock, an internal time-keeping system, regulates various physiological processes through the generation of approximately 24 hour circadian rhythms in gene expression, which are translated into rhythms in metabolism and behavior. It is derived from the Latin roots 'circa' (about) and 'diem' (day) and acts as an important regulator of a wide array of physiological functions including metabolism, sleep, body temperature, blood pressure, endocrine, immune, cardiovascular, and renal function. Consists of two major components: the central clock, residing in the suprachiasmatic nucleus (SCN) of the brain, and the peripheral clocks that are present in nearly every tissue and organ system. Both the central and peripheral clocks can be reset by environmental cues, also known as Zeitgebers (German for 'timegivers'). The predominant Zeitgeber for the central clock is light, which is sensed by retina and signals directly to the SCN. The central clock entrains the peripheral clocks through neuronal and hormonal signals, body temperature and feeding-related cues, aligning all clocks with the external light/dark cycle. Circadian rhythms allow an organism to achieve temporal homeostasis with its environment at the molecular level by regulating gene expression to create a peak of protein expression once every 24 hours to control when a particular physiological process is most active with respect to the solar day. Transcription and translation of core clock components (CLOCK, NPAS2, BMAL1, BMAL2, PER1, PER2, PER3, CRY1 and CRY2) plays a critical role in rhythm generation, whereas delays imposed by post-translational modifications (PTMs) are important for determining the period (tau) of the rhythms (tau refers to the period of a rhythm and is the length, in time, of one complete cycle). A diurnal rhythm is synchronized with the day/night cycle, while the ultradian and infradian rhythms have a period shorter and longer than 24 hours, respectively. Disruptions in the circadian rhythms contribute to the pathology of cardiovascular diseases, cancer, metabolic syndromes and aging. A transcription/translation feedback loop (TTFL) forms the core of the molecular circadian clock mechanism. Transcription factors, CLOCK or NPAS2 and BMAL1 or BMAL2, form the positive limb of the feedback loop, act in the form of a heterodimer and activate the transcription of core clock genes and clock-controlled genes (involved in key metabolic processes), harboring E-box elements (5'-CACGTG-3') within their promoters. The core clock genes: PER1/2/3 and CRY1/2 which are transcriptional repressors form the negative limb of the feedback loop and interact with the CLOCK|NPAS2-BMAL1|BMAL2 heterodimer inhibiting its activity and thereby negatively regulating their own expression. This heterodimer also activates nuclear receptors NR1D1/2 and RORA/B/G, which form a second feedback loop and which activate and repress BMAL1 transcription, respectively. BMAL1 positively regulates myogenesis and negatively regulates adipogenesis via the transcriptional control of the genes of the canonical Wnt signaling pathway. Plays a role in normal pancreatic beta-cell function; regulates glucose-stimulated insulin secretion via the regulation of antioxidant genes NFE2L2/NRF2 and its targets SESN2, PRDX3, CCLC and CCLM. Negatively regulates the mTORC1 signaling pathway; regulates the expression of MTOR and DEPTOR. Controls diurnal oscillations of Ly6C inflammatory monocytes; rhythmic recruitment of the PRC2 complex imparts diurnal variation to chemokine expression that is necessary to sustain Ly6C monocyte rhythms. Regulates the expression of HSD3B2, STAR, PTGS2, CYP11A1, CYP19A1 and LHCGR in the ovary and also the genes involved in hair growth. Plays an important role in adult hippocampal neurogenesis by regulating the timely entry of neural stem/progenitor cells (NSPCs) into the cell cycle and the number of cell divisions that take place prior to cell-cycle exit. Regulates the circadian expression of CIART and KLF11. The CLOCK-BMAL1 heterodimer regulates the circadian expression of SERPINE1/PAI1, VWF, B3, CCRN4L/NOC, NAMPT, DBP, MYOD1, PPARGC1A, PPARGC1B, SIRT1, GYS2, F7, NGFR, GNRHR, BHLHE40/DEC1, ATF4, MTA1, KLF10 and also genes implicated in glucose and lipid metabolism. Promotes rhythmic chromatin opening, regulating the DNA accessibility of other transcription factors. The NPAS2-BMAL1 heterodimer positively regulates the expression of MAOA, F7 and LDHA and modulates the circadian rhythm of daytime contrast sensitivity by regulating the rhythmic expression of adenylate cyclase type 1 (ADCY1) in the retina. The preferred binding motif for the CLOCK-BMAL1 heterodimer is 5'-CACGTGA-3', which contains a flanking adenine nucleotide at the 3-prime end of the canonical 6-nucleotide E-box sequence. CLOCK specifically binds to the half-site 5'-CAC-3', while BMAL1 binds to the half-site 5'-GTGA-3'. The CLOCK-BMAL1 heterodimer also recognizes the non-canonical E-box motifs 5'-AACGTGA-3' and 5'-CATGTGA-3'. Essential for the rhythmic interaction of CLOCK with ASS1 and plays a critical role in positively regulating CLOCK-mediated acetylation of ASS1. Plays a role in protecting against lethal sepsis by limiting the expression of immune checkpoint protein CD274 in macrophages in a PKM2-dependent manner. Regulates the diurnal rhythms of skeletal muscle metabolism via transcriptional activation of genes promoting triglyceride synthesis (DGAT2) and metabolic efficiency (COQ10B). The polypeptide is Basic helix-loop-helix ARNT-like protein 1 (Bmal1) (Nannospalax galili (Northern Israeli blind subterranean mole rat)).